A 567-amino-acid polypeptide reads, in one-letter code: TGF-beta receptor type-2 (567 aa).

Residues 1–22 (MGRGLLRGLWPLHIVLWTRIAS) form the signal peptide. Topologically, residues 23 to 166 (TIPPHVQKSV…NPDLLLVIFQ (144 aa)) are extracellular. 6 disulfide bridges follow: C51/C84, C54/C71, C61/C67, C77/C101, C121/C136, and C138/C143. N-linked (GlcNAc...) asparagine glycans are attached at residues N70 and N94. An N-linked (GlcNAc...) asparagine glycan is attached at N154. A helical transmembrane segment spans residues 167–187 (VTGISLLPPLGVAISVIIIFY). The Cytoplasmic portion of the chain corresponds to 188–567 (CYRVNRQQKL…PEDGSLNTTK (380 aa)). The region spanning 244-544 (IELDTLVGKG…AERFSELEHL (301 aa)) is the Protein kinase domain. ATP-binding positions include 250 to 258 (VGKGRFAEV) and K277. The active-site Proton acceptor is D379. A phosphoserine mark is found at S409, S548, and S553. Residues 439–567 (VESFKQTDVY…PEDGSLNTTK (129 aa)) are sufficient for interaction with CLU.

This sequence belongs to the protein kinase superfamily. TKL Ser/Thr protein kinase family. TGFB receptor subfamily. Homodimer. Heterohexamer; TGFB1, TGFB2 and TGFB3 homodimeric ligands assemble a functional receptor composed of two TGFBR1 and TGFBR2 heterodimers to form a ligand-receptor heterohexamer. The respective affinity of TGFRB1 and TGFRB2 for the ligands may modulate the kinetics of assembly of the receptor and may explain the different biological activities of TGFB1, TGFB2 and TGFB3. Component of a complex composed of TSC22D1 (via N-terminus), TGFBR1 and TGFBR2; the interaction between TSC22D1 and TGFBR1 is inhibited by SMAD7 and promoted by TGFB1. Interacts with DAXX. Interacts with DYNLT4. Interacts with ZFYVE9; ZFYVE9 recruits SMAD2 and SMAD3 to the TGF-beta receptor. Interacts with and is activated by SCUBE3; this interaction does not affect TGFB1-binding to TGFBR2. Interacts with VPS39; this interaction is independent of the receptor kinase activity and of the presence of TGF-beta. Interacts with CLU. In terms of assembly, homodimer; disulfide-linked. It depends on Mg(2+) as a cofactor. Mn(2+) is required as a cofactor. Phosphorylated on a Ser/Thr residue in the cytoplasmic domain.

The protein localises to the cell membrane. Its subcellular location is the membrane raft. The protein resides in the secreted. The enzyme catalyses L-threonyl-[receptor-protein] + ATP = O-phospho-L-threonyl-[receptor-protein] + ADP + H(+). It carries out the reaction L-seryl-[receptor-protein] + ATP = O-phospho-L-seryl-[receptor-protein] + ADP + H(+). Transmembrane serine/threonine kinase forming with the TGF-beta type I serine/threonine kinase receptor, TGFBR1, the non-promiscuous receptor for the TGF-beta cytokines TGFB1, TGFB2 and TGFB3. Transduces the TGFB1, TGFB2 and TGFB3 signal from the cell surface to the cytoplasm and thus regulates a plethora of physiological and pathological processes including cell cycle arrest in epithelial and hematopoietic cells, control of mesenchymal cell proliferation and differentiation, wound healing, extracellular matrix production, immunosuppression and carcinogenesis. The formation of the receptor complex composed of 2 TGFBR1 and 2 TGFBR2 molecules symmetrically bound to the cytokine dimer results in the phosphorylation and activation of TGFBR1 by the constitutively active TGFBR2. Activated TGFBR1 phosphorylates SMAD2 which dissociates from the receptor and interacts with SMAD4. The SMAD2-SMAD4 complex is subsequently translocated to the nucleus where it modulates the transcription of the TGF-beta-regulated genes. This constitutes the canonical SMAD-dependent TGF-beta signaling cascade. Also involved in non-canonical, SMAD-independent TGF-beta signaling pathways. In terms of biological role, has transforming growth factor beta-activated receptor activity. Its function is as follows. Binds TGFB1, TGFB2 and TGFB3 in the picomolar affinity range without the participation of additional receptors. Blocks activation of SMAD2 and SMAD3 by TGFB1. The sequence is that of TGF-beta receptor type-2 (TGFBR2) from Homo sapiens (Human).